The following is a 1013-amino-acid chain: Chitin synthase A (1013 aa).

N-linked (GlcNAc...) asparagine glycosylation is present at Asn10. 2 disordered regions span residues 26–83 (RYSY…AADW) and 95–218 (ERAD…RRGV). The span at 64–81 (TASRPASPARPWSPTRAA) shows a compositional bias: low complexity. The span at 154–173 (TISSRHGPQGSVQSFTSEST) shows a compositional bias: polar residues. Asn194 and Asn316 each carry an N-linked (GlcNAc...) asparagine glycan. 5 helical membrane-spanning segments follow: residues 646–666 (LLQLIFTYFGLANFYLAFFFI), 686–706 (IFIVLRYACVLVMCLQFIFSM), 721–741 (MIVYSIVMAYTAFCTLYLIVL), 759–779 (LFVNIVVSLLSTVGLYFFTSF), and 792–811 (AQYFALLPSYICTLQCYAFC). Asn837 carries N-linked (GlcNAc...) asparagine glycosylation. The next 2 helical transmembrane spans lie at 892 to 912 (VSVWMVANVVLAMAVSEVYGV) and 919 to 939 (VYLAIILWSVAVLAIIRAIGS). Residues Asn967, Asn980, Asn989, and Asn995 are each glycosylated (N-linked (GlcNAc...) asparagine).

This sequence belongs to the chitin synthase family. Class II subfamily. As to expression, mainly expressed in the metulae, phialides, and conidia.

The protein resides in the cell membrane. Its subcellular location is the cell septum. The catalysed reaction is [(1-&gt;4)-N-acetyl-beta-D-glucosaminyl](n) + UDP-N-acetyl-alpha-D-glucosamine = [(1-&gt;4)-N-acetyl-beta-D-glucosaminyl](n+1) + UDP + H(+). Functionally, polymerizes chitin, a structural polymer of the cell wall and septum, by transferring the sugar moiety of UDP-GlcNAc to the non-reducing end of the growing chitin polymer. Seems not to be involved in hyphal growth, but, with chsC, chsA shares critical functions in hyphal wall integrity and differentiation. ChsA and chsC share also overlapping roles in septum formation. Invoved in the production of the asexual spores (conidia) that are formed by differentiated aerial hyphae called conidiophores. This is Chitin synthase A from Emericella nidulans (strain FGSC A4 / ATCC 38163 / CBS 112.46 / NRRL 194 / M139) (Aspergillus nidulans).